We begin with the raw amino-acid sequence, 91 residues long: CRISPR-associated endoribonuclease Cas2 2 (91 aa).

Asp10 contacts Mg(2+).

Belongs to the CRISPR-associated endoribonuclease Cas2 protein family. Homodimer, forms a heterotetramer with a Cas1 homodimer. Requires Mg(2+) as cofactor.

Functionally, CRISPR (clustered regularly interspaced short palindromic repeat), is an adaptive immune system that provides protection against mobile genetic elements (viruses, transposable elements and conjugative plasmids). CRISPR clusters contain sequences complementary to antecedent mobile elements and target invading nucleic acids. CRISPR clusters are transcribed and processed into CRISPR RNA (crRNA). Functions as a ssRNA-specific endoribonuclease. Involved in the integration of spacer DNA into the CRISPR cassette. This is CRISPR-associated endoribonuclease Cas2 2 from Thermodesulfovibrio yellowstonii (strain ATCC 51303 / DSM 11347 / YP87).